The primary structure comprises 86 residues: uncharacterized protein (86 aa).

The N-terminal stretch at 1 to 22 (MKTINTVVAAMALSTLSFGVFA) is a signal peptide.

The protein belongs to the BhsA/McbA family.

It localises to the periplasm. This is an uncharacterized protein from Escherichia coli O6:H1 (strain CFT073 / ATCC 700928 / UPEC).